The primary structure comprises 494 residues: Cysteine--tRNA ligase (494 aa).

Position 29 (Cys-29) interacts with Zn(2+). The 'HIGH' region motif lies at 31 to 41 (VTVYDHCHIGH). Residues Cys-209, His-234, and Glu-238 each coordinate Zn(2+). The short motif at 266–270 (KMSKS) is the 'KMSKS' region element. Lys-269 serves as a coordination point for ATP.

The protein belongs to the class-I aminoacyl-tRNA synthetase family. Monomer. It depends on Zn(2+) as a cofactor.

The protein resides in the cytoplasm. It catalyses the reaction tRNA(Cys) + L-cysteine + ATP = L-cysteinyl-tRNA(Cys) + AMP + diphosphate. The protein is Cysteine--tRNA ligase of Geotalea daltonii (strain DSM 22248 / JCM 15807 / FRC-32) (Geobacter daltonii).